Here is a 397-residue protein sequence, read N- to C-terminus: Major outer membrane porin, serovar H (397 aa).

The signal sequence occupies residues M1–A22.

This sequence belongs to the chlamydial porin (CP) (TC 1.B.2) family. In terms of assembly, part of a disulfide cross-linked outer membrane complex (COMC) composed of the major outer membrane porin (MOMP), the small cysteine-rich protein (OmcA) and the large cysteine-rich periplasmic protein (OmcB).

The protein localises to the cell outer membrane. Its function is as follows. In elementary bodies (EBs, the infectious stage, which is able to survive outside the host cell) provides the structural integrity of the outer envelope through disulfide cross-links with the small cysteine-rich protein and the large cysteine-rich periplasmic protein. It has been described in publications as the Sarkosyl-insoluble COMC (Chlamydia outer membrane complex), and serves as the functional equivalent of peptidoglycan. In terms of biological role, permits diffusion of specific solutes through the outer membrane. The polypeptide is Major outer membrane porin, serovar H (ompA) (Chlamydia trachomatis).